The primary structure comprises 214 residues: Large ribosomal subunit protein uL3 (214 aa).

Residues 129–155 (FGRGPMSHGSKNHRRPGSVGAGTTPGR) form a disordered region.

This sequence belongs to the universal ribosomal protein uL3 family. Part of the 50S ribosomal subunit. Forms a cluster with proteins L14 and L19.

Its function is as follows. One of the primary rRNA binding proteins, it binds directly near the 3'-end of the 23S rRNA, where it nucleates assembly of the 50S subunit. The protein is Large ribosomal subunit protein uL3 of Synechococcus sp. (strain JA-3-3Ab) (Cyanobacteria bacterium Yellowstone A-Prime).